Reading from the N-terminus, the 291-residue chain is MSHEKSLQEKKDSSSFKSFHDGASLENDLLQNLQLSSQTVLEIAQKKGRSKCPKCNSSRMFYCYTCFVPVESVPSDDIPVVKLPLKIDIIKHPNETDGKSTAVHAKLLAHEDVTVYTYPCVPQYHDQKHEVVVVFPGPDSVSLSDYLLYLSSSGDLEKNSAYEPSSKRPKFSPENDKNTYEGIDKKKPVNFLKKVIFIDSTWNQTNKMIADERLQGLVHVELMERKTFFWRHQKGTPNTYLSTIEAIYYFMVDYHTKILQKDYKGEYDNLLFFFSFMYRIINDAKKSAGKL.

The tract at residues 158 to 181 is disordered; it reads KNSAYEPSSKRPKFSPENDKNTYE. The span at 171 to 181 shows a compositional bias: basic and acidic residues; it reads FSPENDKNTYE. Positions 199 to 202 match the DXTW motif; the sequence is DSTW.

It belongs to the TDD superfamily. DTWD1 family.

The protein resides in the nucleus. It catalyses the reaction a uridine in tRNA + S-adenosyl-L-methionine = a 3-[(3S)-3-amino-3-carboxypropyl]uridine in tRNA + S-methyl-5'-thioadenosine + H(+). Catalyzes the formation of 3-(3-amino-3-carboxypropyl)uridine (acp3U) at position 20 in the D-loop of several cytoplasmic tRNAs (acp3U(20)). In Xenopus laevis (African clawed frog), this protein is tRNA-uridine aminocarboxypropyltransferase 1.